Consider the following 195-residue polypeptide: Holliday junction branch migration complex subunit RuvA (195 aa).

The tract at residues 1-64 is domain I; the sequence is MIASIRGIIQ…EDALTLYGFS (64 aa). The segment at 65–142 is domain II; the sequence is DPAQRNLFEQ…DLRQLSGTTP (78 aa). A flexible linker region spans residues 143-151; that stretch reads GNVSTLDRE. Residues 151–195 form a domain III region; that stretch reads ELTDILISLGYSATEAAAAIAALPGDAPPTLEERLRLALRYFGSA.

The protein belongs to the RuvA family. Homotetramer. Forms an RuvA(8)-RuvB(12)-Holliday junction (HJ) complex. HJ DNA is sandwiched between 2 RuvA tetramers; dsDNA enters through RuvA and exits via RuvB. An RuvB hexamer assembles on each DNA strand where it exits the tetramer. Each RuvB hexamer is contacted by two RuvA subunits (via domain III) on 2 adjacent RuvB subunits; this complex drives branch migration. In the full resolvosome a probable DNA-RuvA(4)-RuvB(12)-RuvC(2) complex forms which resolves the HJ.

The protein localises to the cytoplasm. Functionally, the RuvA-RuvB-RuvC complex processes Holliday junction (HJ) DNA during genetic recombination and DNA repair, while the RuvA-RuvB complex plays an important role in the rescue of blocked DNA replication forks via replication fork reversal (RFR). RuvA specifically binds to HJ cruciform DNA, conferring on it an open structure. The RuvB hexamer acts as an ATP-dependent pump, pulling dsDNA into and through the RuvAB complex. HJ branch migration allows RuvC to scan DNA until it finds its consensus sequence, where it cleaves and resolves the cruciform DNA. This Chloroflexus aurantiacus (strain ATCC 29364 / DSM 637 / Y-400-fl) protein is Holliday junction branch migration complex subunit RuvA.